A 64-amino-acid polypeptide reads, in one-letter code: Large ribosomal subunit protein bL35 (64 aa).

The segment covering methionine 1 to arginine 15 has biased composition (basic residues). Positions methionine 1 to alanine 27 are disordered.

This sequence belongs to the bacterial ribosomal protein bL35 family.

This Saccharopolyspora erythraea (strain ATCC 11635 / DSM 40517 / JCM 4748 / NBRC 13426 / NCIMB 8594 / NRRL 2338) protein is Large ribosomal subunit protein bL35.